Here is a 123-residue protein sequence, read N- to C-terminus: Protein Wnt-3a (123 aa).

Ser1 carries the O-palmitoleoyl serine lipid modification. Cysteines 89 and 104 form a disulfide. N-linked (GlcNAc...) asparagine glycosylation is present at Asn90.

The protein belongs to the Wnt family. Disulfide bonds have critical and distinct roles in secretion and activity. Loss of each conserved cysteine results in high molecular weight oxidized Wnt oligomers, which are formed through inter-Wnt disulfide bonding. In terms of processing, palmitoleoylation is required for efficient binding to frizzled receptors. Depalmitoleoylation leads to Wnt signaling pathway inhibition.

The protein localises to the secreted. Its subcellular location is the extracellular space. The protein resides in the extracellular matrix. Ligand for members of the frizzled family of seven transmembrane receptors. Functions in the canonical Wnt signaling pathway that results in activation of transcription factors of the TCF/LEF family. Required for normal embryonic mesoderm development and formation of caudal somites. Required for normal morphogenesis of the developing neural tube. The chain is Protein Wnt-3a (WNT3A) from Meleagris gallopavo (Wild turkey).